A 386-amino-acid polypeptide reads, in one-letter code: Lysophosphatidylserine lipase ABHD12 (386 aa).

Residues 1 to 66 (MRKRAEPVPP…YGLWSRLRMF (66 aa)) lie on the Cytoplasmic side of the membrane. The chain crosses the membrane as a helical span at residues 67-87 (LIFLLGLYIAIPFLVKICPAI). Topologically, residues 88–386 (QTQLVFLNLV…RDFLGNTEQQ (299 aa)) are extracellular. N-linked (GlcNAc...) asparagine glycosylation is present at N114. S237 acts as the Nucleophile in catalysis. Catalysis depends on charge relay system residues D324 and H363.

Belongs to the serine esterase family.

The protein localises to the endoplasmic reticulum membrane. The enzyme catalyses 1-(9Z-octadecenoyl)-sn-glycero-3-phospho-L-serine + H2O = sn-glycero-3-phospho-L-serine + (9Z)-octadecenoate + H(+). The catalysed reaction is 1-(9Z-octadecenoyl)-sn-glycero-3-phospho-(1'-sn-glycerol) + H2O = sn-glycero-3-phospho-(1'-sn-glycerol) + (9Z)-octadecenoate + H(+). It carries out the reaction 1-(9Z-octadecenoyl)-sn-glycero-3-phospho-(1D-myo-inositol) + H2O = sn-glycero-3-phospho-1D-myo-inositol + (9Z)-octadecenoate + H(+). It catalyses the reaction 1-(9Z-octadecenoyl)-sn-glycero-3-phosphoethanolamine + H2O = sn-glycero-3-phosphoethanolamine + (9Z)-octadecenoate + H(+). The enzyme catalyses 1-(9Z-octadecenoyl)-sn-glycero-3-phosphocholine + H2O = 1-(9Z-octadecenoyl)-sn-glycerol + phosphocholine + H(+). The catalysed reaction is 2-(9Z-octadecenoyl)-glycerol + H2O = glycerol + (9Z)-octadecenoate + H(+). It carries out the reaction 1-hexadecanoyl-sn-glycero-3-phospho-L-serine + H2O = sn-glycero-3-phospho-L-serine + hexadecanoate + H(+). It catalyses the reaction 2-(5Z,8Z,11Z,14Z-eicosatetraenoyl)-glycerol + H2O = glycerol + (5Z,8Z,11Z,14Z)-eicosatetraenoate + H(+). The enzyme catalyses Hydrolyzes glycerol monoesters of long-chain fatty acids.. The catalysed reaction is 1-decanoylglycerol + H2O = decanoate + glycerol + H(+). It carries out the reaction 1-dodecanoylglycerol + H2O = dodecanoate + glycerol + H(+). It catalyses the reaction 1-tetradecanoylglycerol + H2O = tetradecanoate + glycerol + H(+). The enzyme catalyses 2-hexadecanoylglycerol + H2O = glycerol + hexadecanoate + H(+). The catalysed reaction is 1-(9Z-octadecenoyl)-glycerol + H2O = glycerol + (9Z)-octadecenoate + H(+). It carries out the reaction 2-(9Z,12Z-octadecadienoyl)-glycerol + H2O = (9Z,12Z)-octadecadienoate + glycerol + H(+). It catalyses the reaction 1-(5Z,8Z,11Z,14Z-eicosatetraenoyl)-glycerol + H2O = glycerol + (5Z,8Z,11Z,14Z)-eicosatetraenoate + H(+). The enzyme catalyses 1-(9Z,12Z-octadecadienoyl)-glycerol + H2O = (9Z,12Z)-octadecadienoate + glycerol + H(+). The catalysed reaction is 1-hexadecanoylglycerol + H2O = glycerol + hexadecanoate + H(+). It carries out the reaction 1-octadecanoylglycerol + H2O = octadecanoate + glycerol + H(+). It catalyses the reaction 1-octadecanoyl-2-(9,10-epoxyoctadecanoyl)-sn-glycero-3-phospho-L-serine + H2O = 9,10-epoxyoctadecanoate + 1-octadecanoyl-sn-glycero-3-phosphoserine + H(+). The enzyme catalyses 1-octadecanoyl-2-(10-hydroxyoctadecanoyl)-sn-glycero-3-phospho-L-serine + H2O = 1-octadecanoyl-sn-glycero-3-phosphoserine + 10-hydroxyoctadecanoate + H(+). The catalysed reaction is 1-hexadecanoyl-2-(10-hydroxyoctadecanoyl)-sn-glycero-3-phospho-L-serine + H2O = 10-hydroxyoctadecanoate + 1-hexadecanoyl-sn-glycero-3-phospho-L-serine + H(+). Lysophosphatidylserine (LPS) lipase that mediates the hydrolysis of lysophosphatidylserine, a class of signaling lipids that regulates immunological and neurological processes. Represents a major lysophosphatidylserine lipase in the brain, thereby playing a key role in the central nervous system. Also able to hydrolyze oxidized phosphatidylserine; oxidized phosphatidylserine is produced in response to severe inflammatory stress and constitutes a proapoptotic 'eat me' signal. Also has monoacylglycerol (MAG) lipase activity: hydrolyzes 2-arachidonoylglycerol (2-AG), thereby acting as a regulator of endocannabinoid signaling pathways. Has a strong preference for very-long-chain lipid substrates; substrate specificity is likely due to improved catalysis and not improved substrate binding. In Xenopus tropicalis (Western clawed frog), this protein is Lysophosphatidylserine lipase ABHD12.